We begin with the raw amino-acid sequence, 191 residues long: UPF0312 protein Shew185_3055 (191 aa).

Residues 1–22 (MKKQLLSALIGASLLAPMAASA) form the signal peptide.

The protein belongs to the UPF0312 family. Type 1 subfamily.

It localises to the periplasm. This is UPF0312 protein Shew185_3055 from Shewanella baltica (strain OS185).